The primary structure comprises 251 residues: Membrane-anchored junction protein (251 aa).

The Nuclear segment spans residues 1 to 227; that stretch reads MSLKPFTYPF…HSNPPPLKEP (227 aa). The segment at 140–225 is disordered; that stretch reads RKRKLMEEPS…LEHSNPPPLK (86 aa). Residues 183 to 198 are compositionally biased toward polar residues; that stretch reads EDSQQDTPASDSTAVT. A helical transmembrane segment spans residues 228-246; it reads AARGFLGFLSALFPFRYFF. Residues 247–251 lie on the Perinuclear space side of the membrane; sequence RKSTQ.

It belongs to the MAJIN family. As to quaternary structure, component of the MAJIN-TERB1-TERB2 complex, composed of MAJIN, TERB1 and TERB2.

It is found in the nucleus inner membrane. The protein resides in the chromosome. The protein localises to the telomere. Functionally, meiosis-specific telomere-associated protein involved in meiotic telomere attachment to the nucleus inner membrane, a crucial step for homologous pairing and synapsis. Component of the MAJIN-TERB1-TERB2 complex, which promotes telomere cap exchange by mediating attachment of telomeric DNA to the inner nuclear membrane and replacement of the protective cap of telomeric chromosomes: in early meiosis, the MAJIN-TERB1-TERB2 complex associates with telomeric DNA and the shelterin/telosome complex. During prophase, the complex matures and promotes release of the shelterin/telosome complex from telomeric DNA. In the complex, MAJIN acts as the anchoring subunit to the nucleus inner membrane. MAJIN shows DNA-binding activity, possibly for the stabilization of telomere attachment on the nucleus inner membrane. The sequence is that of Membrane-anchored junction protein from Rattus norvegicus (Rat).